A 187-amino-acid chain; its full sequence is Adenylate kinase (187 aa).

Residue 10–15 coordinates ATP; the sequence is GSGKGT. An NMP region spans residues 30–59; the sequence is STGDLLRAEVAAGSPLGLKAKEVMARGDLV. Residues Thr-31, Arg-36, 57-59, 85-88, and Gln-92 contribute to the AMP site; these read DLV and GYPR. Residues 126–136 are LID; it reads GRAKAEGREDD. Arg-127 lines the ATP pocket. AMP-binding residues include Arg-133 and Arg-144. Gly-172 contacts ATP.

This sequence belongs to the adenylate kinase family. Monomer.

It is found in the cytoplasm. The enzyme catalyses AMP + ATP = 2 ADP. The protein operates within purine metabolism; AMP biosynthesis via salvage pathway; AMP from ADP: step 1/1. Its function is as follows. Catalyzes the reversible transfer of the terminal phosphate group between ATP and AMP. Plays an important role in cellular energy homeostasis and in adenine nucleotide metabolism. In Xanthomonas campestris pv. campestris (strain 8004), this protein is Adenylate kinase.